The sequence spans 67 residues: Large ribosomal subunit protein bL35 (67 aa).

It belongs to the bacterial ribosomal protein bL35 family.

The chain is Large ribosomal subunit protein bL35 from Rhizobium etli (strain CIAT 652).